Consider the following 100-residue polypeptide: Large ribosomal subunit protein bL21 (100 aa).

This sequence belongs to the bacterial ribosomal protein bL21 family. In terms of assembly, part of the 50S ribosomal subunit. Contacts protein L20.

Its function is as follows. This protein binds to 23S rRNA in the presence of protein L20. In Mycoplasma pneumoniae (strain ATCC 29342 / M129 / Subtype 1) (Mycoplasmoides pneumoniae), this protein is Large ribosomal subunit protein bL21.